Consider the following 503-residue polypeptide: E3 ubiquitin-protein ligase IE61 (503 aa).

An RING-type zinc finger spans residues 19 to 58 (CAICMSAISGLGKTLPCLHDFCFVCIQTWTSTSAQCPLCR). Disordered regions lie at residues 175 to 194 (AVIT…PSSR), 367 to 418 (SGPI…LFVD), and 445 to 503 (AALP…VRRK). Positions 375 to 388 (GGSTSQDTSVSNIH) are enriched in polar residues. Residues 389 to 403 (RSPPGGSSTQPSSGR) show a composition bias toward low complexity. A compositionally biased stretch (basic residues) spans 404-414 (RPGRPKGVKRR). Over residues 471–480 (PSTSGSSPSP) the composition is skewed to low complexity.

In terms of assembly, interacts with host BTRC; this interaction seems to inactivate SCF-mediated protein degradation in general.

It carries out the reaction S-ubiquitinyl-[E2 ubiquitin-conjugating enzyme]-L-cysteine + [acceptor protein]-L-lysine = [E2 ubiquitin-conjugating enzyme]-L-cysteine + N(6)-ubiquitinyl-[acceptor protein]-L-lysine.. In terms of biological role, RING-finger E3 ubiquitin ligase that degrades host SP100, one of the major components of ND10 nuclear bodies, thereby disrupting the organization of these bodies. Also plays a role in the inhibition of host NF-kappa-B pathway by blocking the SCF(BTRC)-mediated addition of ubiquitin chains to host IkappaBalpha/NFKBIA, thereby interfering with its degradation. The polypeptide is E3 ubiquitin-protein ligase IE61 (Cercopithecine herpesvirus 9 (strain DHV) (CeHV-9)).